Here is a 166-residue protein sequence, read N- to C-terminus: Endoribonuclease YbeY (166 aa).

Zn(2+)-binding residues include His-129, His-133, and His-139.

This sequence belongs to the endoribonuclease YbeY family. Zn(2+) is required as a cofactor.

The protein resides in the cytoplasm. In terms of biological role, single strand-specific metallo-endoribonuclease involved in late-stage 70S ribosome quality control and in maturation of the 3' terminus of the 16S rRNA. The chain is Endoribonuclease YbeY from Heliobacterium modesticaldum (strain ATCC 51547 / Ice1).